A 72-amino-acid polypeptide reads, in one-letter code: Small ribosomal subunit protein bS18 (72 aa).

The protein belongs to the bacterial ribosomal protein bS18 family. As to quaternary structure, part of the 30S ribosomal subunit. Forms a tight heterodimer with protein bS6.

Its function is as follows. Binds as a heterodimer with protein bS6 to the central domain of the 16S rRNA, where it helps stabilize the platform of the 30S subunit. The sequence is that of Small ribosomal subunit protein bS18 from Fusobacterium nucleatum subsp. nucleatum (strain ATCC 25586 / DSM 15643 / BCRC 10681 / CIP 101130 / JCM 8532 / KCTC 2640 / LMG 13131 / VPI 4355).